A 688-amino-acid polypeptide reads, in one-letter code: MTAVPAPRSLFVLLQVLWLALAQIRGPPGEPGPPGPPGPPGVPGSDGIDGDKGPPGKVGPPGSKGEPGKPGPDGPDGKPGIDGLMGAKGEPGPVGTPGVKGQPGLPGPPGLPGPGFAGPPGPPGPVGLPGEIGTPGPKGDPGPEGPSGPPGPPGKPGRPGTIQGLEGSADFLCPTNCPAGVKGPQGLQGVKGHPGKRGILGDPGRQGKPGPKGDVGASGEQGIPGPPGPQGIRGYPGMAGPKGEMGPRGYKGMVGSIGAAGPPGEEGPRGPPGEAGEKGDVGSQGARGPQGITGPKGITGPPGIDGKDGTPGIPGMKGSAGQVGRPGSPGHQGLAGVPGQPGTKGGPGDKGEPGQQGLPGVSGPPGKEGEPGPRGEIGPQGIMGQKGDQGERGPVGQPGPQGRQGPKGEQGPPGIPGPQGLPGIKGDKGSPGKTGPRGGVGDPGVAGLPGEKGEKGQSGEPGLKGQQGVRGETGYPGPSGDIGAPGVQGYPGLPGPRGLVGDRGVPGQPGRQGVVGRAASDQHIVDVVLKMIQEQLAEVAVSAKREALGAAGMVGLPGPPGPPGYPGKQGPNGHPGPRGIPGIVGAVGQIGNTGPKGKRGEKGDRGEMGHGHPGMPGPPGIPGLPGRPGQAINGKDGDRGSPGAPGEAGRPGRPGPVGLPGFCEPAACLGASAYTSARLTEPGSIKGP.

A signal peptide spans Met1–Ala22. Positions Gly26–Ile162 are triple-helical region 4 (COL4). Residues Gly26–Phe171 are disordered. 2 stretches are compositionally biased toward pro residues: residues Pro28 to Val42 and Leu105 to Val126. A compositionally biased stretch (low complexity) spans Leu128 to Pro137. Over residues Lys138–Pro156 the composition is skewed to pro residues. Pro159 bears the 4-hydroxyproline mark. Residues Gln163–Ala179 form a nonhelical region 4 (NC4) region. A glycan (O-linked (Xyl...) (glycosaminoglycan) serine) is linked at Ser168. Residues Gly180–Ala518 form a triple-helical region 3 (COL3) region. Lys182 bears the 5-hydroxylysine mark. O-linked (Gal...) hydroxylysine glycosylation is present at Lys182. The interval Gly183 to Arg517 is disordered. Composition is skewed to low complexity over residues Pro289–Pro314 and Arg392–Pro412. Residues Gly435–Gly444 are compositionally biased toward gly residues. Residues Asp502–Arg517 show a composition bias toward low complexity. Residues Ala519–Leu548 form a nonhelical region 3 (NC3) region. Residues Gly549–Ala631 form a triple-helical region 2 (COL2) region. Residues Met553–Glu664 form a disordered region. Basic and acidic residues predominate over residues Lys598–His610. A nonhelical region 2 (NC2) region spans residues Ile632–Asn633. The interval Gly634–Cys663 is triple-helical region 1 (COL1). Residues Glu664–Pro688 form a nonhelical region 1 (NC1) region.

The protein belongs to the fibril-associated collagens with interrupted helices (FACIT) family. In terms of assembly, heterotrimer of an alpha 1(IX), an alpha 2(IX) and an alpha 3(IX) chain. The chains are linked to each other by interchain disulfide bonds. Trimers are also cross-linked via hydroxylysines. In terms of processing, covalently linked to the telopeptides of type II collagen by lysine-derived cross-links. Prolines at the third position of the tripeptide repeating unit (G-X-Y) are hydroxylated in some or all of the chains.

It localises to the secreted. The protein localises to the extracellular space. Its subcellular location is the extracellular matrix. Its function is as follows. Structural component of hyaline cartilage and vitreous of the eye. The sequence is that of Collagen alpha-2(IX) chain (Col9a2) from Mus musculus (Mouse).